Reading from the N-terminus, the 207-residue chain is MAFLVRMLGRADYEPVWRAMQEFTGQRADDTADELWLVEHPPVYTLGMNGDPAHILDAGGVPVVRTDRGGQVTYHGPGQLVLYTLVDLQRRKLGVRRMVSALEQAVIGLLRQYGLEARARGDAPGVYVDGAKIASLGLRVRRGCCYHGVALNVCPELEAFDRIHPCGHAGLAVTRLTDLGVEAQVFEPAAALVRELMVQLGDEEIAA.

Residues 29–204 enclose the BPL/LPL catalytic domain; it reads DDTADELWLV…ELMVQLGDEE (176 aa). Residues 68 to 75, 135 to 137, and 148 to 150 each bind substrate; these read RGGQVTYH, SLG, and GVA. The active-site Acyl-thioester intermediate is C166.

The protein belongs to the LipB family.

It localises to the cytoplasm. The catalysed reaction is octanoyl-[ACP] + L-lysyl-[protein] = N(6)-octanoyl-L-lysyl-[protein] + holo-[ACP] + H(+). Its pathway is protein modification; protein lipoylation via endogenous pathway; protein N(6)-(lipoyl)lysine from octanoyl-[acyl-carrier-protein]: step 1/2. Functionally, catalyzes the transfer of endogenously produced octanoic acid from octanoyl-acyl-carrier-protein onto the lipoyl domains of lipoate-dependent enzymes. Lipoyl-ACP can also act as a substrate although octanoyl-ACP is likely to be the physiological substrate. The sequence is that of Octanoyltransferase from Methylococcus capsulatus (strain ATCC 33009 / NCIMB 11132 / Bath).